A 137-amino-acid chain; its full sequence is NADH dehydrogenase [ubiquinone] 1 beta subcomplex subunit 7 (137 aa).

The N-myristoyl glycine moiety is linked to residue G2. Residues 56-98 (RDYCAHYLIRLLKCKRDSFPNFLACKHEQHDWDYCEHLDYVKR) enclose the CHCH domain. Positions 59–69 (CAHYLIRLLKC) match the Cx9C motif 1 motif. Cystine bridges form between C59–C90 and C69–C80. S73 is modified (phosphoserine). The short motif at 80 to 90 (CKHEQHDWDYC) is the Cx9C motif 2 element.

Belongs to the complex I NDUFB7 subunit family. In terms of assembly, complex I is composed of 45 different subunits.

The protein resides in the mitochondrion inner membrane. The protein localises to the mitochondrion intermembrane space. Accessory subunit of the mitochondrial membrane respiratory chain NADH dehydrogenase (Complex I), that is believed not to be involved in catalysis. Complex I functions in the transfer of electrons from NADH to the respiratory chain. The immediate electron acceptor for the enzyme is believed to be ubiquinone. This Mus musculus (Mouse) protein is NADH dehydrogenase [ubiquinone] 1 beta subcomplex subunit 7 (Ndufb7).